The chain runs to 120 residues: Large ribosomal subunit protein uL18 (120 aa).

Residues 1-29 (MITKPNKNAGRKKRHAHVRRTLSGTPQRP) are disordered. The span at 9 to 20 (AGRKKRHAHVRR) shows a compositional bias: basic residues.

The protein belongs to the universal ribosomal protein uL18 family. In terms of assembly, part of the 50S ribosomal subunit; part of the 5S rRNA/L5/L18/L25 subcomplex. Contacts the 5S and 23S rRNAs.

Its function is as follows. This is one of the proteins that bind and probably mediate the attachment of the 5S RNA into the large ribosomal subunit, where it forms part of the central protuberance. This chain is Large ribosomal subunit protein uL18, found in Shouchella clausii (strain KSM-K16) (Alkalihalobacillus clausii).